We begin with the raw amino-acid sequence, 146 residues long: Small ribosomal subunit protein bS16 (146 aa).

Residues 84 to 102 (SHLEAQKAAVERLGRRKDY) are compositionally biased toward basic and acidic residues. A disordered region spans residues 84-146 (SHLEAQKAAV…DAPAAEATTE (63 aa)). A compositionally biased stretch (low complexity) spans 110–119 (APKAAPVAEA). Over residues 120-130 (PAEEAPAEEPA) the composition is skewed to acidic residues. Residues 131–146 (AEASTDDAPAAEATTE) show a composition bias toward low complexity.

Belongs to the bacterial ribosomal protein bS16 family.

The protein is Small ribosomal subunit protein bS16 of Rhodopirellula baltica (strain DSM 10527 / NCIMB 13988 / SH1).